A 311-amino-acid polypeptide reads, in one-letter code: tRNA-cytidine(32) 2-sulfurtransferase (311 aa).

The PP-loop motif motif lies at S47–S52. [4Fe-4S] cluster contacts are provided by C122, C125, and C213.

Belongs to the TtcA family. Homodimer. Requires Mg(2+) as cofactor. [4Fe-4S] cluster is required as a cofactor.

Its subcellular location is the cytoplasm. It carries out the reaction cytidine(32) in tRNA + S-sulfanyl-L-cysteinyl-[cysteine desulfurase] + AH2 + ATP = 2-thiocytidine(32) in tRNA + L-cysteinyl-[cysteine desulfurase] + A + AMP + diphosphate + H(+). Its pathway is tRNA modification. Catalyzes the ATP-dependent 2-thiolation of cytidine in position 32 of tRNA, to form 2-thiocytidine (s(2)C32). The sulfur atoms are provided by the cysteine/cysteine desulfurase (IscS) system. In Escherichia coli O81 (strain ED1a), this protein is tRNA-cytidine(32) 2-sulfurtransferase.